The sequence spans 89 residues: MYLNPEKKKEFFAKYGKSNTDSGSPEGQIALFSYRISHLTEHLKVNRKDYNTERSLKMLVGKRRRLLDYLKRCDIGRYRFIINELGIRR.

This sequence belongs to the universal ribosomal protein uS15 family. As to quaternary structure, part of the 30S ribosomal subunit. Forms a bridge to the 50S subunit in the 70S ribosome, contacting the 23S rRNA.

One of the primary rRNA binding proteins, it binds directly to 16S rRNA where it helps nucleate assembly of the platform of the 30S subunit by binding and bridging several RNA helices of the 16S rRNA. Functionally, forms an intersubunit bridge (bridge B4) with the 23S rRNA of the 50S subunit in the ribosome. This chain is Small ribosomal subunit protein uS15, found in Azobacteroides pseudotrichonymphae genomovar. CFP2.